Reading from the N-terminus, the 219-residue chain is Endonuclease III (219 aa).

Residues 109–128 (RDELVKLPGVGRKTANVVVS) enclose the HhH domain. [4Fe-4S] cluster is bound by residues cysteine 189, cysteine 196, cysteine 199, and cysteine 205.

The protein belongs to the Nth/MutY family. [4Fe-4S] cluster is required as a cofactor.

It catalyses the reaction 2'-deoxyribonucleotide-(2'-deoxyribose 5'-phosphate)-2'-deoxyribonucleotide-DNA = a 3'-end 2'-deoxyribonucleotide-(2,3-dehydro-2,3-deoxyribose 5'-phosphate)-DNA + a 5'-end 5'-phospho-2'-deoxyribonucleoside-DNA + H(+). In terms of biological role, DNA repair enzyme that has both DNA N-glycosylase activity and AP-lyase activity. The DNA N-glycosylase activity releases various damaged pyrimidines from DNA by cleaving the N-glycosidic bond, leaving an AP (apurinic/apyrimidinic) site. The AP-lyase activity cleaves the phosphodiester bond 3' to the AP site by a beta-elimination, leaving a 3'-terminal unsaturated sugar and a product with a terminal 5'-phosphate. This chain is Endonuclease III, found in Bacillus subtilis (strain 168).